The following is a 301-amino-acid chain: uncharacterized protein (301 aa).

The protein belongs to the asfivirus E301R family. In terms of assembly, interacts with host IRF3.

Functionally, plays a role in the inhibition of host innate immune system by acting as a negatively regulator of type I interferon production. Mechanistically, interacts with and prevents host IRF3 nuclear localization to inhibit its transcriptional activity. This is an uncharacterized protein from African swine fever virus (isolate Warthog/Namibia/Wart80/1980) (ASFV).